We begin with the raw amino-acid sequence, 32 residues long: Photosystem II reaction center protein T (32 aa).

Residues 3–23 (AITYTFILFLTLGLLFFAVAF) form a helical membrane-spanning segment.

It belongs to the PsbT family. As to quaternary structure, PSII is composed of 1 copy each of membrane proteins PsbA, PsbB, PsbC, PsbD, PsbE, PsbF, PsbH, PsbI, PsbJ, PsbK, PsbL, PsbM, PsbT, PsbX, PsbY, PsbZ, Psb30/Ycf12, peripheral proteins PsbO, CyanoQ (PsbQ), PsbU, PsbV and a large number of cofactors. It forms dimeric complexes.

The protein localises to the cellular thylakoid membrane. Functionally, found at the monomer-monomer interface of the photosystem II (PS II) dimer, plays a role in assembly and dimerization of PSII. PSII is a light-driven water plastoquinone oxidoreductase, using light energy to abstract electrons from H(2)O, generating a proton gradient subsequently used for ATP formation. This Synechococcus sp. (strain JA-2-3B'a(2-13)) (Cyanobacteria bacterium Yellowstone B-Prime) protein is Photosystem II reaction center protein T.